We begin with the raw amino-acid sequence, 81 residues long: CLAVATA3/ESR (CLE)-related protein 6 (81 aa).

The N-terminal stretch at 1-26 (MANLILKQSLIILLIIYSTPILSSQA) is a signal peptide. Hydroxyproline is present on residues proline 73 and proline 76. O-linked (Ara...) hydroxyproline glycosylation is present at proline 76.

The protein belongs to the CLV3/ESR signal peptide family. In terms of processing, the O-glycosylation (arabinosylation) of the hydroxyproline Pro-76 enhances binding affinity of the CLE6p peptide for its receptor. In terms of tissue distribution, mostly expressed in roots, seedlings, stems and flowers, and, to a lower extent, in apex and siliques.

It localises to the secreted. It is found in the extracellular space. Extracellular signal peptide that regulates cell fate. The protein is CLAVATA3/ESR (CLE)-related protein 6 of Arabidopsis thaliana (Mouse-ear cress).